The primary structure comprises 420 residues: GDP-mannose transporter 2 (420 aa).

Over residues 1 to 11 the composition is skewed to polar residues; it reads MASYTPSSSRP. The tract at residues 1–21 is disordered; sequence MASYTPSSSRPHTPLGLSPRG. Residues 1 to 76 are Cytoplasmic-facing; sequence MASYTPSSSR…KAKKEEVCMP (76 aa). Residues 77-97 form a helical membrane-spanning segment; the sequence is ASTTVLPILSYCVASIMMTVV. Over 98–106 the chain is Lumenal; it reads NKFVVSGRQ. A helical transmembrane segment spans residues 107–127; it reads FTMTFLLLAIQSFVCVACVWL. The Cytoplasmic segment spans residues 128–145; it reads AKRIGVINFRDWDMNDAK. The helical transmembrane segment at 146 to 168 threads the bilayer; it reads AWFPVSSLLVAVIYTGSKSLQFL. Residues 169 to 171 are Lumenal-facing; the sequence is SIP. Residues 172–194 form a helical membrane-spanning segment; sequence VYTIFKNLTIILIAYGEVIWFGG. Residues 195–200 are Cytoplasmic-facing; the sequence is HVTPLT. Residues 201-223 form a helical membrane-spanning segment; the sequence is LCSFFLMVGSSVIAAWADISTTL. Residues 224 to 251 lie on the Lumenal side of the membrane; that stretch reads SKLSAGVAVVDPISGADVPLSSISVMDT. The helical transmembrane segment at 252–272 threads the bilayer; sequence MNVGYLWMFINCLASAGYVLF. The Cytoplasmic portion of the chain corresponds to 273-293; it reads MRKRIKVTGFKDWDSMFYNNL. Residues 294 to 314 traverse the membrane as a helical segment; it reads LSIPVLFVFSLIIEDWGAASF. Residues 315–323 are Lumenal-facing; it reads SRNFPEEGR. A helical transmembrane segment spans residues 324–344; it reads AFLLSAIAFSGAAAVFISYST. Residues 345–355 are Cytoplasmic-facing; that stretch reads AWCVRICGATT. A helical membrane pass occupies residues 356-376; that stretch reads YSLVGALNKLPVAASGILFFG. Topologically, residues 377-378 are lumenal; it reads DP. A helical transmembrane segment spans residues 379 to 399; that stretch reads VNFGNVSAILVGGVSGIVYAV. Topologically, residues 400–420 are cytoplasmic; the sequence is AKTNQAKVEKSKQARGGESKA.

The protein belongs to the TPT transporter family. SLC35D subfamily. Homooligomer.

It localises to the golgi apparatus membrane. The protein localises to the cytoplasmic vesicle membrane. Its subcellular location is the endoplasmic reticulum membrane. In terms of biological role, involved in the import of GDP-mannose from the cytoplasm into the Golgi lumen. The sequence is that of GDP-mannose transporter 2 (GMT2) from Cryptococcus neoformans var. neoformans serotype D (strain B-3501A) (Filobasidiella neoformans).